The chain runs to 558 residues: Urocanate hydratase (558 aa).

Residues 54–55, glutamine 132, 178–180, glutamate 198, 244–245, 265–269, 275–276, and tyrosine 324 each bind NAD(+); these read GG, GMG, NA, QTSAH, and YL. Cysteine 412 is an active-site residue. Glycine 494 provides a ligand contact to NAD(+).

The protein belongs to the urocanase family. It depends on NAD(+) as a cofactor.

Its subcellular location is the cytoplasm. The enzyme catalyses 4-imidazolone-5-propanoate = trans-urocanate + H2O. The protein operates within amino-acid degradation; L-histidine degradation into L-glutamate; N-formimidoyl-L-glutamate from L-histidine: step 2/3. Catalyzes the conversion of urocanate to 4-imidazolone-5-propionate. This Acinetobacter baumannii (strain SDF) protein is Urocanate hydratase.